Here is a 371-residue protein sequence, read N- to C-terminus: MLGSCGAGLVRGLRAETQAWLWGTRGRSLALVHAARGLHAANWQPSPGQGPRGRPLSLSAAAVVNSAPRPLQPYLRLMRLDKPIGTWLLYLPCTWSIGLAADPGCLPDWYMLSLFGTGAVLMRGAGCTINDMWDRDYDKKVTRTASRPIAAGDISTFRSFVFLGGQLTLALGVLLCLNYYSIALGAASLLLVTTYPLMKRITYWPQLALGLTFNWGALLGWSAVKGSCDPSVCLPLYFSGIMWTLIYDTIYAHQDKKDDALIGLKSTALLFREDTKKWLSGFSVAMLGALSLVGVNSGQTMPYYTALAAVGAHLAHQIYTLDINRPEDCWEKFTSNRTIGLIIFLGIVLGNLCKAKETDKTRKNIENRMEN.

The N-terminal 45 residues, 1–45, are a transit peptide targeting the mitochondrion; it reads MLGSCGAGLVRGLRAETQAWLWGTRGRSLALVHAARGLHAANWQP. Over 46-83 the chain is Mitochondrial matrix; the sequence is SPGQGPRGRPLSLSAAAVVNSAPRPLQPYLRLMRLDKP. A helical transmembrane segment spans residues 84 to 104; the sequence is IGTWLLYLPCTWSIGLAADPG. The Mitochondrial intermembrane segment spans residues 105–108; sequence CLPD. Residues 109–129 traverse the membrane as a helical segment; the sequence is WYMLSLFGTGAVLMRGAGCTI. Residues 130 to 171 lie on the Mitochondrial matrix side of the membrane; that stretch reads NDMWDRDYDKKVTRTASRPIAAGDISTFRSFVFLGGQLTLAL. A helical transmembrane segment spans residues 172 to 192; it reads GVLLCLNYYSIALGAASLLLV. Residues 193-200 are Mitochondrial intermembrane-facing; it reads TTYPLMKR. Residues 201–221 form a helical membrane-spanning segment; that stretch reads ITYWPQLALGLTFNWGALLGW. Residues 222 to 231 lie on the Mitochondrial matrix side of the membrane; it reads SAVKGSCDPS. Residues 232 to 252 traverse the membrane as a helical segment; the sequence is VCLPLYFSGIMWTLIYDTIYA. At 253 to 277 the chain is on the mitochondrial intermembrane side; sequence HQDKKDDALIGLKSTALLFREDTKK. Residues 278–298 traverse the membrane as a helical segment; sequence WLSGFSVAMLGALSLVGVNSG. Topologically, residues 299–300 are mitochondrial matrix; it reads QT. A helical membrane pass occupies residues 301 to 321; the sequence is MPYYTALAAVGAHLAHQIYTL. Over 322–332 the chain is Mitochondrial intermembrane; the sequence is DINRPEDCWEK. Residues 333–353 traverse the membrane as a helical segment; it reads FTSNRTIGLIIFLGIVLGNLC. Residues 354 to 371 lie on the Mitochondrial matrix side of the membrane; that stretch reads KAKETDKTRKNIENRMEN.

The protein belongs to the UbiA prenyltransferase family. Requires Mg(2+) as cofactor.

Its subcellular location is the mitochondrion inner membrane. It carries out the reaction an all-trans-polyprenyl diphosphate + 4-hydroxybenzoate = a 4-hydroxy-3-(all-trans-polyprenyl)benzoate + diphosphate. The enzyme catalyses all-trans-decaprenyl diphosphate + 4-hydroxybenzoate = 4-hydroxy-3-(all-trans-decaprenyl)benzoate + diphosphate. The catalysed reaction is all-trans-nonaprenyl diphosphate + 4-hydroxybenzoate = 4-hydroxy-3-(all-trans-nonaprenyl)benzoate + diphosphate. Its pathway is cofactor biosynthesis; ubiquinone biosynthesis. In terms of biological role, mediates the second step in the final reaction sequence of coenzyme Q (CoQ) biosynthesis. Catalyzes the prenylation of para-hydroxybenzoate (PHB) with an all-trans polyprenyl donor (such as all-trans-decaprenyl diphosphate). The length of the polyprenyl side chain varies depending on the species, in humans, the side chain is comprised of 10 isoprenyls (decaprenyl) producing CoQ10 (also known as ubiquinone), whereas rodents predominantly generate CoQ9. However, this specificity is not complete, human tissues have low amounts of CoQ9 and rodent organs contain some CoQ10. Plays a central role in the biosynthesis of CoQ10. CoQ10 is a vital molecule that transports electrons from mitochondrial respiratory chain complexes. CoQs also function as cofactors for uncoupling protein and play a role as regulators of the extracellularly-induced ceramide-dependent apoptotic pathway. Regulates mitochondrial permeability transition pore (mPTP) opening and ROS production (pivotal events in cell death) in a tissue specific manner. This is 4-hydroxybenzoate polyprenyltransferase, mitochondrial from Bos taurus (Bovine).